Reading from the N-terminus, the 187-residue chain is DNA-directed RNA polymerase subunit Rpo7 (187 aa).

In terms of domain architecture, S1 motif spans 82–166 (YELIEGEVVD…RGSKIALTMR (85 aa)).

The protein belongs to the eukaryotic RPB7/RPC8 RNA polymerase subunit family. In terms of assembly, part of the RNA polymerase complex. Forms a stalk with Rpo4 that extends from the main structure.

The protein localises to the cytoplasm. It carries out the reaction RNA(n) + a ribonucleoside 5'-triphosphate = RNA(n+1) + diphosphate. In terms of biological role, DNA-dependent RNA polymerase (RNAP) catalyzes the transcription of DNA into RNA using the four ribonucleoside triphosphates as substrates. The polypeptide is DNA-directed RNA polymerase subunit Rpo7 (Methanocaldococcus jannaschii (strain ATCC 43067 / DSM 2661 / JAL-1 / JCM 10045 / NBRC 100440) (Methanococcus jannaschii)).